The primary structure comprises 302 residues: Spermidine synthase (302 aa).

Met1 bears the N-acetylmethionine mark. Positions 18 to 253 constitute a PABS domain; that stretch reads EGWFRETCSL…GQIGFMLCSK (236 aa). Gln49 serves as a coordination point for S-adenosyl 3-(methylsulfanyl)propylamine. Tyr79 is a putrescine binding site. Residues Gln80, Asp104, Glu124, 155-156, and Asp173 each bind S-adenosyl 3-(methylsulfanyl)propylamine; that span reads DG. Catalysis depends on Asp173, which acts as the Proton acceptor. Putrescine contacts are provided by residues 173-176 and Tyr241; that span reads DSSD.

This sequence belongs to the spermidine/spermine synthase family. In terms of assembly, homodimer or homotetramer.

It catalyses the reaction S-adenosyl 3-(methylsulfanyl)propylamine + putrescine = S-methyl-5'-thioadenosine + spermidine + H(+). It functions in the pathway amine and polyamine biosynthesis; spermidine biosynthesis; spermidine from putrescine: step 1/1. Its activity is regulated as follows. The activity is thought to be regulated mainly by the availability of decarboxylated S-adenosylmethionine. Catalyzes the production of spermidine from putrescine and decarboxylated S-adenosylmethionine (dcSAM). Has a strong preference for putrescine as substrate, and has very low activity towards 1,3-diaminopropane. Has extremely low activity towards spermidine. The protein is Spermidine synthase (SRM) of Homo sapiens (Human).